Reading from the N-terminus, the 98-residue chain is MMSINLNLIMAFSLALAGVLIYRSHLMSTLLCLEGMMLSLFILMALIISHFHMFSTSMAPLILLVFSACEAGVGLALLVKTSSNYGNDYVQNLNLLQC.

Transmembrane regions (helical) follow at residues 1-21 (MMSI…GVLI), 28-48 (STLL…ALII), and 59-79 (APLI…ALLV).

This sequence belongs to the complex I subunit 4L family. Core subunit of respiratory chain NADH dehydrogenase (Complex I) which is composed of 45 different subunits.

The protein resides in the mitochondrion inner membrane. The catalysed reaction is a ubiquinone + NADH + 5 H(+)(in) = a ubiquinol + NAD(+) + 4 H(+)(out). Functionally, core subunit of the mitochondrial membrane respiratory chain NADH dehydrogenase (Complex I) which catalyzes electron transfer from NADH through the respiratory chain, using ubiquinone as an electron acceptor. Part of the enzyme membrane arm which is embedded in the lipid bilayer and involved in proton translocation. In Lagostrophus fasciatus (Banded hare-wallaby), this protein is NADH-ubiquinone oxidoreductase chain 4L (MT-ND4L).